Consider the following 230-residue polypeptide: Uracil-DNA glycosylase (230 aa).

Aspartate 70 (proton acceptor) is an active-site residue.

This sequence belongs to the uracil-DNA glycosylase (UDG) superfamily. UNG family.

Its subcellular location is the cytoplasm. The enzyme catalyses Hydrolyzes single-stranded DNA or mismatched double-stranded DNA and polynucleotides, releasing free uracil.. Its function is as follows. Excises uracil residues from the DNA which can arise as a result of misincorporation of dUMP residues by DNA polymerase or due to deamination of cytosine. The protein is Uracil-DNA glycosylase of Pseudomonas putida (strain GB-1).